The following is a 93-amino-acid chain: Pyrimidine/purine nucleoside phosphorylase (93 aa).

Belongs to the nucleoside phosphorylase PpnP family.

It catalyses the reaction a purine D-ribonucleoside + phosphate = a purine nucleobase + alpha-D-ribose 1-phosphate. The enzyme catalyses adenosine + phosphate = alpha-D-ribose 1-phosphate + adenine. The catalysed reaction is cytidine + phosphate = cytosine + alpha-D-ribose 1-phosphate. It carries out the reaction guanosine + phosphate = alpha-D-ribose 1-phosphate + guanine. It catalyses the reaction inosine + phosphate = alpha-D-ribose 1-phosphate + hypoxanthine. The enzyme catalyses thymidine + phosphate = 2-deoxy-alpha-D-ribose 1-phosphate + thymine. The catalysed reaction is uridine + phosphate = alpha-D-ribose 1-phosphate + uracil. It carries out the reaction xanthosine + phosphate = alpha-D-ribose 1-phosphate + xanthine. In terms of biological role, catalyzes the phosphorolysis of diverse nucleosides, yielding D-ribose 1-phosphate and the respective free bases. Can use uridine, adenosine, guanosine, cytidine, thymidine, inosine and xanthosine as substrates. Also catalyzes the reverse reactions. The sequence is that of Pyrimidine/purine nucleoside phosphorylase from Vibrio atlanticus (strain LGP32) (Vibrio splendidus (strain Mel32)).